Here is a 620-residue protein sequence, read N- to C-terminus: Cryptochrome-1 (620 aa).

Positions 3-132 constitute a Photolyase/cryptochrome alpha/beta domain; that stretch reads VNAVHWFRKG…EVIVRISHTL (130 aa). 3 consecutive short sequence motifs (LIR) follow at residues 50–54, 82–87, and 151–156; these read NRWRF, DVFPRL, and KRFQTL. Ser252 serves as a coordination point for FAD. 4 short sequence motifs (LIR) span residues 255-260, 271-276, 285-290, and 335-339; these read LRFGCL, DLYKKV, SLYGQL, and TGFPW. Gln289 contributes to the FAD binding site. An FAD-binding site is contributed by His355. Residues 379 to 384 carry the LIR 8 motif; that stretch reads KVFEEL. An FAD-binding site is contributed by 387 to 389; it reads DAD. Short sequence motifs (LIR) lie at residues 395 to 400, 411 to 416, 430 to 435, 486 to 491, and 492 to 497; these read GSWMWL, HCYCPV, RRYLPV, QIYQQL, and SRYRGL. The disordered stretch occupies residues 593 to 620; that stretch reads TGISAGKRPNPEEETQSVGPKVQRQSTN.

This sequence belongs to the DNA photolyase class-1 family. As to quaternary structure, component of the circadian core oscillator, which includes the CRY proteins, CLOCK or NPAS2, BMAL1 or BMAL2, CSNK1E, and the PER proteins. Requires FAD as cofactor. (6R)-5,10-methylene-5,6,7,8-tetrahydrofolate serves as cofactor. Expressed in the retina.

It is found in the cytoplasm. The protein resides in the nucleus. Transcriptional repressor which forms a core component of the circadian clock. The circadian clock, an internal time-keeping system, regulates various physiological processes through the generation of approximately 24 hour circadian rhythms in gene expression, which are translated into rhythms in metabolism and behavior. It is derived from the Latin roots 'circa' (about) and 'diem' (day) and acts as an important regulator of a wide array of physiological functions including metabolism, sleep, body temperature, blood pressure, endocrine, immune, cardiovascular, and renal function. Consists of two major components: the central clock, residing in the suprachiasmatic nucleus (SCN) of the brain, and the peripheral clocks that are present in nearly every tissue and organ system. Both the central and peripheral clocks can be reset by environmental cues, also known as Zeitgebers (German for 'timegivers'). The predominant Zeitgeber for the central clock is light, which is sensed by retina and signals directly to the SCN. The central clock entrains the peripheral clocks through neuronal and hormonal signals, body temperature and feeding-related cues, aligning all clocks with the external light/dark cycle. Circadian rhythms allow an organism to achieve temporal homeostasis with its environment at the molecular level by regulating gene expression to create a peak of protein expression once every 24 hours to control when a particular physiological process is most active with respect to the solar day. Transcription and translation of core clock components (CLOCK, NPAS2, BMAL1, BMAL2, PER1, PER2, PER3, CRY1 and CRY2) plays a critical role in rhythm generation, whereas delays imposed by post-translational modifications (PTMs) are important for determining the period (tau) of the rhythms (tau refers to the period of a rhythm and is the length, in time, of one complete cycle). A diurnal rhythm is synchronized with the day/night cycle, while the ultradian and infradian rhythms have a period shorter and longer than 24 hours, respectively. Disruptions in the circadian rhythms contribute to the pathology of cardiovascular diseases, cancer, metabolic syndromes and aging. A transcription/translation feedback loop (TTFL) forms the core of the molecular circadian clock mechanism. Transcription factors, CLOCK or NPAS2 and BMAL1 or BMAL2, form the positive limb of the feedback loop, act in the form of a heterodimer and activate the transcription of core clock genes and clock-controlled genes (involved in key metabolic processes), harboring E-box elements (5'-CACGTG-3') within their promoters. The core clock genes: PER1/2/3 and CRY1/2 which are transcriptional repressors form the negative limb of the feedback loop and interact with the CLOCK|NPAS2-BMAL1|BMAL2 heterodimer inhibiting its activity and thereby negatively regulating their own expression. This heterodimer also activates nuclear receptors NR1D1/2 and RORA/B/G, which form a second feedback loop and which activate and repress BMAL1 transcription, respectively. CRY1 and CRY2 have redundant functions but also differential and selective contributions at least in defining the pace of the SCN circadian clock and its circadian transcriptional outputs. More potent transcriptional repressor in cerebellum and liver than CRY2, though more effective in lengthening the period of the SCN oscillator. On its side, CRY2 seems to play a critical role in tuning SCN circadian period by opposing the action of CRY1. With CRY2, is dispensable for circadian rhythm generation but necessary for the development of intercellular networks for rhythm synchrony. Capable of translocating circadian clock core proteins such as PER proteins to the nucleus. Interacts with CLOCK-BMAL1 independently of PER proteins and is found at CLOCK-BMAL1-bound sites, suggesting that CRY may act as a molecular gatekeeper to maintain CLOCK-BMAL1 in a poised and repressed state until the proper time for transcriptional activation. This chain is Cryptochrome-1 (CRY1), found in Erithacus rubecula (European robin).